A 278-amino-acid chain; its full sequence is HTH-type transcriptional activator RhaS (278 aa).

Residues N174 to G272 form the HTH araC/xylS-type domain. DNA-binding regions (H-T-H motif) lie at residues D191–T212 and V239–F262.

In terms of assembly, binds DNA as a dimer.

The protein resides in the cytoplasm. Its function is as follows. Activates expression of the rhaBAD and rhaT operons. The protein is HTH-type transcriptional activator RhaS of Shigella sonnei (strain Ss046).